Here is a 212-residue protein sequence, read N- to C-terminus: Large ribosomal subunit protein uL3 (212 aa).

A disordered region spans residues 131 to 155 (RGNMTHGSKNHRLPGSTGAGTTPGR).

Belongs to the universal ribosomal protein uL3 family. As to quaternary structure, part of the 50S ribosomal subunit. Forms a cluster with proteins L14 and L19.

Functionally, one of the primary rRNA binding proteins, it binds directly near the 3'-end of the 23S rRNA, where it nucleates assembly of the 50S subunit. This Microcystis aeruginosa (strain NIES-843 / IAM M-2473) protein is Large ribosomal subunit protein uL3.